A 341-amino-acid chain; its full sequence is ATPase GET3 (341 aa).

34–41 (KGGVGKTT) is a binding site for ATP. Asp63 is a catalytic residue. The ATP site is built by Glu245 and Asn272. The Zn(2+) site is built by Cys283 and Cys286.

Belongs to the arsA ATPase family. Homodimer.

The protein resides in the cytoplasm. It localises to the endoplasmic reticulum. Its function is as follows. ATPase required for the post-translational delivery of tail-anchored (TA) proteins to the endoplasmic reticulum. Recognizes and selectively binds the transmembrane domain of TA proteins in the cytosol. This complex then targets to the endoplasmic reticulum by membrane-bound receptors, where the tail-anchored protein is released for insertion. This process is regulated by ATP binding and hydrolysis. ATP binding drives the homodimer towards the closed dimer state, facilitating recognition of newly synthesized TA membrane proteins. ATP hydrolysis is required for insertion. Subsequently, the homodimer reverts towards the open dimer state, lowering its affinity for the membrane-bound receptor, and returning it to the cytosol to initiate a new round of targeting. The chain is ATPase GET3 from Ajellomyces capsulatus (strain G186AR / H82 / ATCC MYA-2454 / RMSCC 2432) (Darling's disease fungus).